The primary structure comprises 401 residues: Acetate kinase (401 aa).

Asn7 is a Mg(2+) binding site. Lys14 contributes to the ATP binding site. Residue Arg92 participates in substrate binding. The active-site Proton donor/acceptor is Asp149. ATP contacts are provided by residues 209-213 (HLGNG), 283-285 (DAR), and 331-335 (GLGEN). Residue Glu385 participates in Mg(2+) binding.

It belongs to the acetokinase family. Homodimer. Mg(2+) is required as a cofactor. The cofactor is Mn(2+).

Its subcellular location is the cytoplasm. It catalyses the reaction acetate + ATP = acetyl phosphate + ADP. Its pathway is metabolic intermediate biosynthesis; acetyl-CoA biosynthesis; acetyl-CoA from acetate: step 1/2. Functionally, catalyzes the formation of acetyl phosphate from acetate and ATP. Can also catalyze the reverse reaction. In Helicobacter pylori (strain Shi470), this protein is Acetate kinase.